Reading from the N-terminus, the 490-residue chain is Cysteine--tRNA ligase (490 aa).

Cys31 contributes to the Zn(2+) binding site. The 'HIGH' region motif lies at 33–43 (PTVYGDAHLGH). The Zn(2+) site is built by Cys226, His251, and Glu255. Positions 283-287 (KMGKS) match the 'KMSKS' region motif. Lys286 serves as a coordination point for ATP.

Belongs to the class-I aminoacyl-tRNA synthetase family. As to quaternary structure, monomer. The cofactor is Zn(2+).

Its subcellular location is the cytoplasm. The catalysed reaction is tRNA(Cys) + L-cysteine + ATP = L-cysteinyl-tRNA(Cys) + AMP + diphosphate. This chain is Cysteine--tRNA ligase, found in Porphyromonas gingivalis (strain ATCC BAA-308 / W83).